Reading from the N-terminus, the 660-residue chain is Dual specificity mitogen-activated protein kinase kinase 1 (660 aa).

Residues 1-57 (MNTNTNTNTNISSSGNNIINTPTTNNNNKNNNNNNNNNNNSNNSNNNSSNNNNNNNN) show a composition bias toward low complexity. 3 disordered regions span residues 1–60 (MNTN…NAVG), 105–169 (KGES…FNNL), and 204–229 (NNNY…SNNN). Residue Lys105 forms a Glycyl lysine isopeptide (Lys-Gly) (interchain with G-Cter in SUMO) linkage. A compositionally biased stretch (polar residues) spans 123 to 148 (LHSNLNPQLLASPTSSESMDFNQGFY). Residues 149–169 (NNNNNNNNNNNNNNLNNFNNL) are compositionally biased toward low complexity. Positions 292–641 (LKIIRVLGRG…ASNLLNHEFV (350 aa)) constitute a Protein kinase domain. ATP-binding positions include 298-306 (LGRGAGGVV) and Lys321. Asp414 serves as the catalytic Proton acceptor. 2 disordered regions span residues 491-510 (SNLP…QQQQ) and 539-573 (NNSN…VLDI). Low complexity-rich tracts occupy residues 496–510 (QQQQ…QQQQ) and 539–569 (NNSN…NNNN).

The protein belongs to the protein kinase superfamily. STE Ser/Thr protein kinase family. MAP kinase kinase subfamily. In terms of assembly, interacts with mip1. Mg(2+) serves as cofactor. Post-translationally, sumoylated and ubiquitinated in response to chemoattractant stimulation. Sumoylation is linked to kinase activation and results in translocation.

It is found in the cytoplasm. The protein localises to the nucleus. The enzyme catalyses L-seryl-[protein] + ATP = O-phospho-L-seryl-[protein] + ADP + H(+). It carries out the reaction L-threonyl-[protein] + ATP = O-phospho-L-threonyl-[protein] + ADP + H(+). It catalyses the reaction L-tyrosyl-[protein] + ATP = O-phospho-L-tyrosyl-[protein] + ADP + H(+). Its function is as follows. Required for cAMP-mediated activation of guanylyl cyclase activity and plays an essential role in aggregation, morphogenesis, and chemotaxis. Appears to act upstream of erk1 but not erk2. In Dictyostelium discoideum (Social amoeba), this protein is Dual specificity mitogen-activated protein kinase kinase 1.